We begin with the raw amino-acid sequence, 248 residues long: Protein STPG4 (248 aa).

In terms of assembly, interacts with histone H3. Interacts with histone H4.

The protein resides in the cytoplasm. Its subcellular location is the nucleus. In terms of biological role, maternal factor that plays a role in epigenetic chromatin reprogramming during early development of the zygote. Involved in the regulation of gametic DNA demethylation by inducing the conversion of the modified genomic base 5-methylcytosine (5mC) into 5-hydroxymethylcytosine (5hmC). In Homo sapiens (Human), this protein is Protein STPG4.